Here is a 285-residue protein sequence, read N- to C-terminus: Eukaryotic translation initiation factor 3 subunit F-2 (285 aa).

The MPN domain occupies 11 to 145; that stretch reads VFIKPLVLFQ…TRLYCAVEIG (135 aa).

It belongs to the eIF-3 subunit F family. Component of the eukaryotic translation initiation factor 3 (eIF-3) complex. The eIF-3 complex interacts with pix.

It localises to the cytoplasm. Component of the eukaryotic translation initiation factor 3 (eIF-3) complex, which is involved in protein synthesis of a specialized repertoire of mRNAs and, together with other initiation factors, stimulates binding of mRNA and methionyl-tRNAi to the 40S ribosome. The eIF-3 complex specifically targets and initiates translation of a subset of mRNAs involved in cell proliferation. This chain is Eukaryotic translation initiation factor 3 subunit F-2, found in Drosophila yakuba (Fruit fly).